We begin with the raw amino-acid sequence, 279 residues long: Lacto-N-neotetraose biosynthesis glycosyltransferase LgtB (279 aa).

The protein belongs to the glycosyltransferase 25 family.

Its pathway is glycan metabolism; lacto-N-neotetraose biosynthesis. It functions in the pathway bacterial outer membrane biogenesis; lipooligosaccharide biosynthesis. Adds the second galactose to the lacto-N-tetraose chain in lipooligosaccharide (LOS). In Neisseria gonorrhoeae, this protein is Lacto-N-neotetraose biosynthesis glycosyltransferase LgtB (lgtB).